The following is a 725-amino-acid chain: Catalase-peroxidase (725 aa).

2 stretches are compositionally biased toward polar residues: residues 1–12 and 23–32; these read MSTSNDPSNNAS and PKQSAGSGTA. Positions 1 to 20 are cleaved as a signal peptide; sequence MSTSNDPSNNASAGKCPFHA. Residues 1-35 are disordered; it reads MSTSNDPSNNASAGKCPFHAETPKQSAGSGTANRD. Residues 105–226 constitute a cross-link (tryptophyl-tyrosyl-methioninium (Trp-Tyr) (with M-252)); sequence WHGAGTYRTV…IGATEMGLIY (122 aa). His106 (proton acceptor) is an active-site residue. A cross-link (tryptophyl-tyrosyl-methioninium (Tyr-Met) (with W-105)) is located at residues 226-252; it reads YVNPEGPNASGEPLSAAAAIRATFGNM. A heme b-binding site is contributed by His267.

Belongs to the peroxidase family. Peroxidase/catalase subfamily. In terms of assembly, homodimer or homotetramer. It depends on heme b as a cofactor. In terms of processing, formation of the three residue Trp-Tyr-Met cross-link is important for the catalase, but not the peroxidase activity of the enzyme.

The enzyme catalyses H2O2 + AH2 = A + 2 H2O. The catalysed reaction is 2 H2O2 = O2 + 2 H2O. In terms of biological role, bifunctional enzyme with both catalase and broad-spectrum peroxidase activity. In Klebsiella pneumoniae subsp. pneumoniae (strain ATCC 700721 / MGH 78578), this protein is Catalase-peroxidase.